We begin with the raw amino-acid sequence, 424 residues long: Serine hydroxymethyltransferase (424 aa).

(6S)-5,6,7,8-tetrahydrofolate contacts are provided by residues Leu113 and 117 to 119; that span reads GHL. Residue Lys222 is modified to N6-(pyridoxal phosphate)lysine. (6S)-5,6,7,8-tetrahydrofolate is bound at residue 361–363; the sequence is SPF.

Belongs to the SHMT family. As to quaternary structure, homodimer. The cofactor is pyridoxal 5'-phosphate.

It localises to the cytoplasm. The catalysed reaction is (6R)-5,10-methylene-5,6,7,8-tetrahydrofolate + glycine + H2O = (6S)-5,6,7,8-tetrahydrofolate + L-serine. The protein operates within one-carbon metabolism; tetrahydrofolate interconversion. It participates in amino-acid biosynthesis; glycine biosynthesis; glycine from L-serine: step 1/1. Its function is as follows. Catalyzes the reversible interconversion of serine and glycine with tetrahydrofolate (THF) serving as the one-carbon carrier. This reaction serves as the major source of one-carbon groups required for the biosynthesis of purines, thymidylate, methionine, and other important biomolecules. Also exhibits THF-independent aldolase activity toward beta-hydroxyamino acids, producing glycine and aldehydes, via a retro-aldol mechanism. The protein is Serine hydroxymethyltransferase of Flavobacterium psychrophilum (strain ATCC 49511 / DSM 21280 / CIP 103535 / JIP02/86).